The following is a 449-amino-acid chain: MDLARYRFDLSIEEVPTSWYNILPDLPEEVPPPLNPKTGEPVDPSALAKLFPKALIEQEVSRERYIEIPGEVHEAYISFARRPTPLLRAVNLERALNTPAEIYYKYEGVTPTGSHKINTALAQAYYNKLEGVERLVTETGAGQWGSALSAAGAYFGVKVRVYMVRVSYLQKPYRRTLMELYGAEVYPSPSDKTEFGRKLLAENPNHPGSLGIAISEAIEDVINSGGNAKYSLGSVLNHVLLHQTVIGLEAEKQFREAGVYPDIMIGAVGGGSNFAGFTYPFIRHRLKGSSSTRFIAVEPKASPSMTRGVYTYDYGDTAGLTPLLKMHTLGHTYQVPPIHAGGLRYHGVAPTLSVLLKHGIVEARAYHQREVFRAAHMFAKAEGIVPAPESAHAVKAAIDEAIKARDEGRRVVIAFNLSGHGLLDLQGYREYLDGTLEDYEPEEIPASRR.

An N6-(pyridoxal phosphate)lysine modification is found at K116.

The protein belongs to the TrpB family. In terms of assembly, tetramer of two alpha and two beta chains. Pyridoxal 5'-phosphate is required as a cofactor.

It catalyses the reaction (1S,2R)-1-C-(indol-3-yl)glycerol 3-phosphate + L-serine = D-glyceraldehyde 3-phosphate + L-tryptophan + H2O. It functions in the pathway amino-acid biosynthesis; L-tryptophan biosynthesis; L-tryptophan from chorismate: step 5/5. Its function is as follows. The beta subunit is responsible for the synthesis of L-tryptophan from indole and L-serine. The chain is Tryptophan synthase beta chain 2 (trpB2) from Aeropyrum pernix (strain ATCC 700893 / DSM 11879 / JCM 9820 / NBRC 100138 / K1).